We begin with the raw amino-acid sequence, 380 residues long: Glucose-1-phosphate adenylyltransferase (380 aa).

Alpha-D-glucose 1-phosphate is bound by residues G164, 179 to 180, and S190; that span reads EK.

The protein belongs to the bacterial/plant glucose-1-phosphate adenylyltransferase family. Homotetramer.

The catalysed reaction is alpha-D-glucose 1-phosphate + ATP + H(+) = ADP-alpha-D-glucose + diphosphate. It participates in glycan biosynthesis; glycogen biosynthesis. Involved in the biosynthesis of ADP-glucose, a building block required for the elongation reactions to produce glycogen. Catalyzes the reaction between ATP and alpha-D-glucose 1-phosphate (G1P) to produce pyrophosphate and ADP-Glc. In Streptococcus pneumoniae serotype 2 (strain D39 / NCTC 7466), this protein is Glucose-1-phosphate adenylyltransferase.